The sequence spans 504 residues: L-amino-acid oxidase (504 aa).

Residues 1–18 (MNVFFMFSLLFLATLGSC) form the signal peptide. A disulfide bridge connects residues C28 and C191. Residues 61-62 (MS), 81-82 (EA), R89, and 105-108 (GPMR) each bind FAD. R108 provides a ligand contact to substrate. N-linked (GlcNAc...) asparagine glycosylation is present at N190. H241 lines the substrate pocket. V279 contacts FAD. Cysteines 349 and 430 form a disulfide. N-linked (GlcNAc...) asparagine glycosylation is present at N379. Y390 contacts substrate. FAD is bound by residues E475 and 482–487 (GWIDST). 482 to 483 (GW) contacts substrate.

The protein belongs to the flavin monoamine oxidase family. FIG1 subfamily. In terms of assembly, homodimer; non-covalently linked. FAD serves as cofactor. In terms of tissue distribution, expressed by the venom gland.

The protein resides in the secreted. The enzyme catalyses an L-alpha-amino acid + O2 + H2O = a 2-oxocarboxylate + H2O2 + NH4(+). It carries out the reaction L-leucine + O2 + H2O = 4-methyl-2-oxopentanoate + H2O2 + NH4(+). The catalysed reaction is L-phenylalanine + O2 + H2O = 3-phenylpyruvate + H2O2 + NH4(+). It catalyses the reaction L-tryptophan + O2 + H2O = indole-3-pyruvate + H2O2 + NH4(+). The enzyme catalyses L-methionine + O2 + H2O = 4-methylsulfanyl-2-oxobutanoate + H2O2 + NH4(+). It carries out the reaction L-tyrosine + O2 + H2O = 3-(4-hydroxyphenyl)pyruvate + H2O2 + NH4(+). Functionally, catalyzes an oxidative deamination of predominantly hydrophobic and aromatic L-amino acids, thus producing hydrogen peroxide that may contribute to the diverse toxic effects of this enzyme. Is highly active on L-Tyr followed by L-Phe, L-Met, L-Leu, L-Trp, and weakly active on L-Ile, L-Arg, L-Val, L-Lys, and L-Ala. Inhibits ADP- and collagen-induced platelet aggregation. This inhibition is inhibited by catalase, indicating the importance of generated H(2)O(2) for the inhibitory effect. This effect on platelets among snake L-amino-acid oxidases is however controversial, since some of them induce aggregation, whereas the other inhibit agonist-induced aggregation. In vivo, this enzyme induces a rapid, substantial and reversible increase in the paw volume of mice (edema). In addition, myofibrosis, and inflammatory cell infiltration on the paw tissue are also observed. The protein is L-amino-acid oxidase of Daboia russelii (Russel's viper).